The sequence spans 423 residues: Dihydroorotase (423 aa).

Residues histidine 60 and histidine 62 each contribute to the Zn(2+) site. Substrate-binding positions include 62–64 (HFR) and asparagine 94. Aspartate 151, histidine 178, and histidine 231 together coordinate Zn(2+). Residue asparagine 277 coordinates substrate. Aspartate 304 is a binding site for Zn(2+). Aspartate 304 is a catalytic residue. Histidine 308 provides a ligand contact to substrate.

Belongs to the metallo-dependent hydrolases superfamily. DHOase family. Class I DHOase subfamily. Zn(2+) serves as cofactor.

It carries out the reaction (S)-dihydroorotate + H2O = N-carbamoyl-L-aspartate + H(+). It functions in the pathway pyrimidine metabolism; UMP biosynthesis via de novo pathway; (S)-dihydroorotate from bicarbonate: step 3/3. Its function is as follows. Catalyzes the reversible cyclization of carbamoyl aspartate to dihydroorotate. The polypeptide is Dihydroorotase (Lactococcus lactis subsp. lactis (strain IL1403) (Streptococcus lactis)).